A 118-amino-acid polypeptide reads, in one-letter code: MNKIDAIELEQMKKNIPPFKPGDTLKVHVKIVEGDKSRIQAFQGVCISRQNGGIRESFTVRKISNNIGVERVFPLHSPTVDAIEVITRGHVRRAKLYYLRKLRGKAARIREKKYVAAQ.

Belongs to the bacterial ribosomal protein bL19 family.

Functionally, this protein is located at the 30S-50S ribosomal subunit interface and may play a role in the structure and function of the aminoacyl-tRNA binding site. In Geobacter sulfurreducens (strain ATCC 51573 / DSM 12127 / PCA), this protein is Large ribosomal subunit protein bL19.